Consider the following 461-residue polypeptide: Cysteine--tRNA ligase (461 aa).

Zn(2+) is bound at residue C27. A 'HIGH' region motif is present at residues 29–39 (ITVYDYCHIGH). Zn(2+)-binding residues include C208, H233, and E237. Positions 265–269 (KMSKS) match the 'KMSKS' region motif. K268 provides a ligand contact to ATP.

It belongs to the class-I aminoacyl-tRNA synthetase family. Monomer. Requires Zn(2+) as cofactor.

It localises to the cytoplasm. It catalyses the reaction tRNA(Cys) + L-cysteine + ATP = L-cysteinyl-tRNA(Cys) + AMP + diphosphate. This is Cysteine--tRNA ligase from Chromohalobacter salexigens (strain ATCC BAA-138 / DSM 3043 / CIP 106854 / NCIMB 13768 / 1H11).